The sequence spans 190 residues: UPF0301 protein Rpic_0619 (190 aa).

This sequence belongs to the UPF0301 (AlgH) family.

The polypeptide is UPF0301 protein Rpic_0619 (Ralstonia pickettii (strain 12J)).